Here is a 28-residue protein sequence, read N- to C-terminus: Potassium channel toxin kappa-KTx 2.9 (28 aa).

2 cysteine pairs are disulfide-bonded: cysteine 4–cysteine 22 and cysteine 8–cysteine 18.

It belongs to the short scorpion toxin superfamily. Potassium channel inhibitor family. Gamma-KTx 2 subfamily. In terms of processing, contains 2 disulfide bonds. As to expression, expressed by the venom gland.

The protein localises to the secreted. In terms of biological role, reversibly blocks voltage-gated potassium channels Kv1.2/KCNA2 and Kv1.3/KCNA3. The sequence is that of Potassium channel toxin kappa-KTx 2.9 from Pandinus imperator (Emperor scorpion).